The chain runs to 289 residues: MAGAKEIRTKISSVQSTQKITKAMEMVAASKMRKTQDRMSSSRPYSKAIQGVISHISKANIDYQHPFLIEREVKNVGILIISTDRGLCGGLNVNLFKTALSEIKNWKEQNVDVSLGLIGAKGIGFFQSLGLKIKAQHSGMGDTPVAEELIGIANRMFEAYKEGKIDAIYVTYNKFINTMSQKPIMEKLVPLPELDNDSLGKNSDNWEYIYEPNPQTLLDSLLVRYLESQVYQAVVENLASEQAARMVAMKAATDNAGNLINDLQLVYNKARQASITNELNEIVAGAAAI.

This sequence belongs to the ATPase gamma chain family. F-type ATPases have 2 components, CF(1) - the catalytic core - and CF(0) - the membrane proton channel. CF(1) has five subunits: alpha(3), beta(3), gamma(1), delta(1), epsilon(1). CF(0) has three main subunits: a, b and c.

It is found in the cell inner membrane. Produces ATP from ADP in the presence of a proton gradient across the membrane. The gamma chain is believed to be important in regulating ATPase activity and the flow of protons through the CF(0) complex. This chain is ATP synthase gamma chain, found in Histophilus somni (strain 2336) (Haemophilus somnus).